Consider the following 1451-residue polypeptide: Dual 3',5'-cyclic-AMP and -GMP phosphodiesterase 11 (1451 aa).

Disordered stretches follow at residues 1–54 (MGQA…PQIQ), 75–100 (ATTP…GGYG), 125–169 (LPAH…QVQQ), 235–262 (GNDV…GATT), and 327–374 (QHHH…GSGG). Residues 11 to 21 (RGCRYKNKNKS) show a composition bias toward basic residues. Low complexity predominate over residues 24 to 45 (QQQQQQQQQQQQQQQHQQQQQQ). Residues 77–91 (TPLQFQPTGRMNTEQ) show a composition bias toward polar residues. 2 stretches are compositionally biased toward low complexity: residues 135–147 (SGAA…NGSS) and 160–169 (QQQQQYQVQQ). Over residues 235–248 (GNDVVSSTSPTHAN) the composition is skewed to polar residues. Basic residues predominate over residues 327 to 340 (QHHHNHAHLHHSQH). Residues 341 to 355 (SHYQAGGAVGSSSLG) are compositionally biased toward low complexity. Positions 356–374 (STGGASGAGGAPSLGGSGG) are enriched in gly residues. GAF domains follow at residues 419 to 572 (EVRT…GIGL) and 604 to 754 (TIEH…GMGI). The PDEase domain occupies 783-1107 (ATMDEAHRLR…GHWIDLADVV (325 aa)). His860 functions as the Proton donor in the catalytic mechanism. His864, His900, Asp901, and Asp1011 together coordinate a divalent metal cation. 4 disordered regions span residues 1109-1171 (TKTS…SNTN), 1200-1248 (DEQA…TPVS), 1268-1305 (QTSN…QELD), and 1325-1364 (INNH…IGSA). 2 stretches are compositionally biased toward low complexity: residues 1142–1171 (ASEA…SNTN) and 1218–1234 (CRSN…SCLS). Over residues 1268–1277 (QTSNQAQTQK) the composition is skewed to polar residues. Over residues 1328–1355 (HSHHHNHSHSHNHNHHHHHHHHSHHNHS) the composition is skewed to basic residues.

This sequence belongs to the cyclic nucleotide phosphodiesterase family. Requires a divalent metal cation as cofactor. In adults, it is enriched in Malpighian tubules.

It carries out the reaction 3',5'-cyclic GMP + H2O = GMP + H(+). The catalysed reaction is 3',5'-cyclic AMP + H2O = AMP + H(+). Functionally, plays a role in signal transduction by regulating the intracellular concentration of cyclic nucleotides cAMP and cGMP. Dual-specificity phosphodiesterase that catalyzes the hydrolysis of both cAMP and cGMP to 5'-AMP and 5'-GMP, respectively. This chain is Dual 3',5'-cyclic-AMP and -GMP phosphodiesterase 11 (Pde11), found in Drosophila melanogaster (Fruit fly).